Consider the following 62-residue polypeptide: Large ribosomal subunit protein bL28 (62 aa).

Residues 1–28 (MARVCAITGRKARSGNSRSHAMNATKRK) are disordered.

This sequence belongs to the bacterial ribosomal protein bL28 family.

This is Large ribosomal subunit protein bL28 from Bacillus thuringiensis (strain Al Hakam).